An 818-amino-acid polypeptide reads, in one-letter code: Response regulator SSK1 (818 aa).

Residues 611-769 form the Response regulatory domain; it reads NVLIVEDNPI…WLERKVMEWG (159 aa). A 4-aspartylphosphate modification is found at Asp-660.

The protein belongs to the SSK1 family.

Its subcellular location is the cytoplasm. Two-domain response regulator protein in the two-component signal transduction system of the HOG1 pathway. Modulates stress response, melanin biosynthesis and virulence via its regulation of the phosphorylation of HOG1. The sequence is that of Response regulator SSK1 from Verticillium dahliae (strain VdLs.17 / ATCC MYA-4575 / FGSC 10137) (Verticillium wilt).